Consider the following 94-residue polypeptide: Progonadoliberin-3 (94 aa).

The N-terminal stretch at 1–23 (MEWKGRVLVQLLMLVCVLEVSLC) is a signal peptide. Residue Gln-24 is modified to Pyrrolidone carboxylic acid. Position 33 is a glycine amide (Gly-33).

Belongs to the GnRH family.

It localises to the secreted. Stimulates the secretion of gonadotropins. This Rutilus rutilus (Roach) protein is Progonadoliberin-3 (gnrh3).